Here is a 359-residue protein sequence, read N- to C-terminus: Guanine nucleotide-binding protein subunit alpha-11 (359 aa).

2 S-palmitoyl cysteine lipidation sites follow: Cys9 and Cys10. In terms of domain architecture, G-alpha spans Arg38 to Val359. Positions Lys41 to Thr54 are G1 motif. Residues Gly46 to Ser53 and Leu180 to Arg183 contribute to the GTP site. Residue Ser53 coordinates Mg(2+). The tract at residues Asp178 to Thr186 is G2 motif. Mg(2+) is bound at residue Thr186. A G3 motif region spans residues Phe201 to Arg210. The G4 motif stretch occupies residues Ile270–Asp277. GTP contacts are provided by residues Asn274–Asp277 and Ala331. Residues Thr329–Thr334 are G5 motif.

Belongs to the G-alpha family. G(q) subfamily. As to quaternary structure, g proteins are composed of 3 units; alpha, beta and gamma. The alpha chain contains the guanine nucleotide binding site. Interacts with RGS22. Interacts with NTSR1.

It localises to the cell membrane. The protein resides in the cytoplasm. It carries out the reaction GTP + H2O = GDP + phosphate + H(+). Its function is as follows. Guanine nucleotide-binding proteins (G proteins) function as transducers downstream of G protein-coupled receptors (GPCRs) in numerous signaling cascades. The alpha chain contains the guanine nucleotide binding site and alternates between an active, GTP-bound state and an inactive, GDP-bound state. Signaling by an activated GPCR promotes GDP release and GTP binding. The alpha subunit has a low GTPase activity that converts bound GTP to GDP, thereby terminating the signal. Both GDP release and GTP hydrolysis are modulated by numerous regulatory proteins. Signaling is mediated via phospholipase C-beta-dependent inositol lipid hydrolysis for signal propagation: activates phospholipase C-beta: following GPCR activation, GNA11 activates PLC-beta (PLCB1, PLCB2, PLCB3 or PLCB4), leading to production of diacylglycerol (DAG) and inositol 1,4,5-trisphosphate (IP3). Transduces FFAR4 signaling in response to long-chain fatty acids (LCFAs). Together with GNAQ, required for heart development. In the respiratory epithelium, transmits OXGR1-dependent signals that lead to downstream intracellular Ca(2+) release and mucocilliary clearance of airborne pathogens. The chain is Guanine nucleotide-binding protein subunit alpha-11 (GNA11) from Bos taurus (Bovine).